The following is a 345-amino-acid chain: L-threonine 3-dehydrogenase (345 aa).

A Zn(2+)-binding site is contributed by Cys-39. Active-site charge relay system residues include Thr-41 and His-44. Residues His-64, Glu-65, Cys-94, Cys-97, Cys-100, and Cys-108 each coordinate Zn(2+). Residues Ile-176, Asp-196, Arg-201, 263-265 (LGI), and 287-288 (VY) each bind NAD(+).

It belongs to the zinc-containing alcohol dehydrogenase family. As to quaternary structure, homotetramer. Zn(2+) is required as a cofactor.

Its subcellular location is the cytoplasm. It carries out the reaction L-threonine + NAD(+) = (2S)-2-amino-3-oxobutanoate + NADH + H(+). The protein operates within amino-acid degradation; L-threonine degradation via oxydo-reductase pathway; glycine from L-threonine: step 1/2. Functionally, catalyzes the NAD(+)-dependent oxidation of L-threonine to 2-amino-3-ketobutyrate. The protein is L-threonine 3-dehydrogenase of Anaeromyxobacter sp. (strain K).